The sequence spans 248 residues: MKNNYTSLKSSIDKEDELKSVHEIDLEKGLLPEYNSDEESTLPPYSDHARVSNPPNTHRENHSSGTTDNSSPFLIKLLISFTSIILFNAPAVCYLKYKDAFFKNYGAAEWTLIGFWCASSLIIFTFSWYFYETWTKAVGKGIKHFLKKWRNIPMAFSEVFLFNILVGSPRVTLRHISGERWGLKCSLADHIIFAILSILVFIVETVEPGSSKINIMKRLRGDNARDATQHVNEYTAVPLREMNPESEA.

Positions 30-68 (LLPEYNSDEESTLPPYSDHARVSNPPNTHRENHSSGTTD) are disordered. The next 4 helical transmembrane spans lie at 73-93 (FLIKLLISFTSIILFNAPAVC), 110-130 (WTLIGFWCASSLIIFTFSWYF), 152-172 (IPMAFSEVFLFNILVGSPRVT), and 186-206 (SLADHIIFAILSILVFIVETV).

Belongs to the WTF family. Homomer. Interacts with other proteins that exhibit high sequence similarity.

Its subcellular location is the spore membrane. The protein resides in the vacuole membrane. Acts as a suppressor component of the dual wtf meiotic drive system, and can suppress but not confer meiotic drive by compatible poisons. Wtf meiotic drive systems promote unequal transmission of alleles from the parental zygote to progeny spores by encoding a poison and an antidote from the same locus; the poison is trans-acting and forms toxic aggregates in all spores within an ascus, wherease the antidote is spore-specific and targets aggregates for degradation by the vacuole. Meiotic drive by wtf systems therefore lead to poisoning of all progeny that do not inherit the dual poison/antidote allele, or express a compatible antidote. The sequence is that of Meiotic drive suppressor wtf1 from Schizosaccharomyces pombe (Fission yeast).